Here is a 558-residue protein sequence, read N- to C-terminus: DNA ligase B (558 aa).

Residue K124 is the N6-AMP-lysine intermediate of the active site.

The protein belongs to the NAD-dependent DNA ligase family. LigB subfamily.

The catalysed reaction is NAD(+) + (deoxyribonucleotide)n-3'-hydroxyl + 5'-phospho-(deoxyribonucleotide)m = (deoxyribonucleotide)n+m + AMP + beta-nicotinamide D-nucleotide.. Catalyzes the formation of phosphodiester linkages between 5'-phosphoryl and 3'-hydroxyl groups in double-stranded DNA using NAD as a coenzyme and as the energy source for the reaction. In Klebsiella pneumoniae (strain 342), this protein is DNA ligase B.